The chain runs to 223 residues: Thiamine-phosphate synthase (223 aa).

4-amino-2-methyl-5-(diphosphooxymethyl)pyrimidine-binding positions include 42-46 (QLRDK) and Asn-83. Mg(2+)-binding residues include Asp-84 and Asp-103. Ser-122 lines the 4-amino-2-methyl-5-(diphosphooxymethyl)pyrimidine pocket. A 2-[(2R,5Z)-2-carboxy-4-methylthiazol-5(2H)-ylidene]ethyl phosphate-binding site is contributed by 148-150 (TPT). 4-amino-2-methyl-5-(diphosphooxymethyl)pyrimidine is bound at residue Lys-151. Position 179 (Gly-179) interacts with 2-[(2R,5Z)-2-carboxy-4-methylthiazol-5(2H)-ylidene]ethyl phosphate.

Belongs to the thiamine-phosphate synthase family. It depends on Mg(2+) as a cofactor.

It catalyses the reaction 2-[(2R,5Z)-2-carboxy-4-methylthiazol-5(2H)-ylidene]ethyl phosphate + 4-amino-2-methyl-5-(diphosphooxymethyl)pyrimidine + 2 H(+) = thiamine phosphate + CO2 + diphosphate. The catalysed reaction is 2-(2-carboxy-4-methylthiazol-5-yl)ethyl phosphate + 4-amino-2-methyl-5-(diphosphooxymethyl)pyrimidine + 2 H(+) = thiamine phosphate + CO2 + diphosphate. It carries out the reaction 4-methyl-5-(2-phosphooxyethyl)-thiazole + 4-amino-2-methyl-5-(diphosphooxymethyl)pyrimidine + H(+) = thiamine phosphate + diphosphate. The protein operates within cofactor biosynthesis; thiamine diphosphate biosynthesis; thiamine phosphate from 4-amino-2-methyl-5-diphosphomethylpyrimidine and 4-methyl-5-(2-phosphoethyl)-thiazole: step 1/1. Its function is as follows. Condenses 4-methyl-5-(beta-hydroxyethyl)thiazole monophosphate (THZ-P) and 2-methyl-4-amino-5-hydroxymethyl pyrimidine pyrophosphate (HMP-PP) to form thiamine monophosphate (TMP). The polypeptide is Thiamine-phosphate synthase (Mycobacterium avium (strain 104)).